The following is a 215-amino-acid chain: Putative zinc finger protein ORF121 (215 aa).

The RING-type; degenerate zinc finger occupies 53–105 (CVICMEPTYTKKTLAECDIEGGALRVTTMPCPTHYICDNCIRQEMEDKCPICR).

This Magallana gigas (Pacific oyster) protein is Putative zinc finger protein ORF121.